A 610-amino-acid chain; its full sequence is Glutamine--fructose-6-phosphate aminotransferase [isomerizing] (610 aa).

The Nucleophile; for GATase activity role is filled by cysteine 2. One can recognise a Glutamine amidotransferase type-2 domain in the interval 2–219; sequence CGIVGATSER…EGDVADINRT (218 aa). SIS domains lie at 287-427 and 459-600; these read AADI…YRGM and LAQD…VDQP. The active-site For Fru-6P isomerization activity is lysine 605.

As to quaternary structure, homodimer.

It is found in the cytoplasm. The enzyme catalyses D-fructose 6-phosphate + L-glutamine = D-glucosamine 6-phosphate + L-glutamate. In terms of biological role, catalyzes the first step in hexosamine metabolism, converting fructose-6P into glucosamine-6P using glutamine as a nitrogen source. The sequence is that of Glutamine--fructose-6-phosphate aminotransferase [isomerizing] from Idiomarina loihiensis (strain ATCC BAA-735 / DSM 15497 / L2-TR).